A 208-amino-acid chain; its full sequence is Large ribosomal subunit protein uL4 (208 aa).

The interval 45–77 (RQGTHKAKERAEIKGSTRKIKKQKGTGTARAGS) is disordered.

This sequence belongs to the universal ribosomal protein uL4 family. Part of the 50S ribosomal subunit.

In terms of biological role, one of the primary rRNA binding proteins, this protein initially binds near the 5'-end of the 23S rRNA. It is important during the early stages of 50S assembly. It makes multiple contacts with different domains of the 23S rRNA in the assembled 50S subunit and ribosome. Functionally, forms part of the polypeptide exit tunnel. The sequence is that of Large ribosomal subunit protein uL4 from Christiangramia forsetii (strain DSM 17595 / CGMCC 1.15422 / KT0803) (Gramella forsetii).